Reading from the N-terminus, the 310-residue chain is 17-beta-hydroxysteroid dehydrogenase type 3 (310 aa).

An NADP(+)-binding site is contributed by 48-77; sequence GQWAVITGAGDGIGKAYSFELAKRGLNVVL. S185 contacts substrate. Y198 functions as the Proton acceptor in the catalytic mechanism.

This sequence belongs to the short-chain dehydrogenases/reductases (SDR) family. 17-beta-HSD 3 subfamily. Testis.

It is found in the endoplasmic reticulum. It carries out the reaction a 17beta-hydroxy steroid + NADP(+) = a 17-oxo steroid + NADPH + H(+). The enzyme catalyses testosterone + NADP(+) = androst-4-ene-3,17-dione + NADPH + H(+). It catalyses the reaction 17beta-estradiol + NADP(+) = estrone + NADPH + H(+). The catalysed reaction is 3beta-hydroxyandrost-5-en-17-one + NADPH + H(+) = androst-5-en-3beta,17beta-diol + NADP(+). It carries out the reaction 17beta-hydroxy-5alpha-androstan-3-one + NADP(+) = 5alpha-androstan-3,17-dione + NADPH + H(+). The enzyme catalyses androsterone + NADPH + H(+) = 5alpha-androstane-3alpha,17beta-diol + NADP(+). It catalyses the reaction 3beta-hydroxy-5alpha-androstan-17-one + NADPH + H(+) = 5alpha-androstane-3beta,17beta-diol + NADP(+). The catalysed reaction is androst-4-ene-3,11,17-trione + NADPH + H(+) = 17beta-hydroxyandrost-4-ene-3,11-dione + NADP(+). It carries out the reaction 11beta-hydroxyandrost-4-ene-3,17-dione + NADPH + H(+) = 11beta,17beta-dihydroxyandrost-4-ene-3-one + NADP(+). It participates in hormone biosynthesis; testosterone biosynthesis. It functions in the pathway steroid metabolism. Functionally, catalyzes the conversion of 17-oxosteroids to 17beta-hydroxysteroids. Favors the reduction of androstenedione to testosterone. Testosterone is the key androgen driving male development and function. Uses NADPH while the two other EDH17B enzymes use NADH. Androgens such as epiandrosterone, dehydroepiandrosterone, androsterone and androstanedione are accepted as substrates and reduced at C-17. Can reduce 11-ketoandrostenedione as well as 11beta-hydroxyandrostenedione at C-17 to the respective testosterone forms. This is 17-beta-hydroxysteroid dehydrogenase type 3 from Homo sapiens (Human).